Consider the following 256-residue polypeptide: uncharacterized protein (256 aa).

The first 22 residues, 1 to 22, serve as a signal peptide directing secretion; sequence MGYLKRIGMCISLLIVIIFVTS. C23 is lipidated: N-palmitoyl cysteine. C23 carries S-diacylglycerol cysteine lipidation.

The protein belongs to the staphylococcal tandem lipoprotein family.

It is found in the cell membrane. This is an uncharacterized protein from Staphylococcus aureus (strain MSSA476).